Consider the following 244-residue polypeptide: Ubiquinone/menaquinone biosynthesis C-methyltransferase UbiE (244 aa).

S-adenosyl-L-methionine-binding positions include Thr-70, Asp-91, and 117–118 (DA).

Belongs to the class I-like SAM-binding methyltransferase superfamily. MenG/UbiE family.

The catalysed reaction is a 2-demethylmenaquinol + S-adenosyl-L-methionine = a menaquinol + S-adenosyl-L-homocysteine + H(+). It catalyses the reaction a 2-methoxy-6-(all-trans-polyprenyl)benzene-1,4-diol + S-adenosyl-L-methionine = a 5-methoxy-2-methyl-3-(all-trans-polyprenyl)benzene-1,4-diol + S-adenosyl-L-homocysteine + H(+). It participates in quinol/quinone metabolism; menaquinone biosynthesis; menaquinol from 1,4-dihydroxy-2-naphthoate: step 2/2. It functions in the pathway cofactor biosynthesis; ubiquinone biosynthesis. Its function is as follows. Methyltransferase required for the conversion of demethylmenaquinol (DMKH2) to menaquinol (MKH2) and the conversion of 2-polyprenyl-6-methoxy-1,4-benzoquinol (DDMQH2) to 2-polyprenyl-3-methyl-6-methoxy-1,4-benzoquinol (DMQH2). The sequence is that of Ubiquinone/menaquinone biosynthesis C-methyltransferase UbiE from Laribacter hongkongensis (strain HLHK9).